Here is a 135-residue protein sequence, read N- to C-terminus: Photosystem II extrinsic protein V (135 aa).

Heme c contacts are provided by cysteine 37, cysteine 40, histidine 41, and histidine 92.

It belongs to the cytochrome c family. PsbV subfamily. As to quaternary structure, PSII is composed of 1 copy each of membrane proteins PsbA, PsbB, PsbC, PsbD, PsbE, PsbF, PsbH, PsbI, PsbJ, PsbK, PsbL, PsbM, PsbT, PsbX, PsbY, PsbZ, Psb30/Ycf12, peripheral proteins PsbO, CyanoQ (PsbQ), PsbU, PsbV and a large number of cofactors. It forms dimeric complexes. Heme c is required as a cofactor.

It localises to the cellular thylakoid membrane. Functionally, one of the extrinsic, lumenal subunits of photosystem II (PSII). PSII is a light-driven water plastoquinone oxidoreductase, using light energy to abstract electrons from H(2)O, generating a proton gradient subsequently used for ATP formation. The extrinsic proteins stabilize the structure of photosystem II oxygen-evolving complex (OEC), the ion environment of oxygen evolution and protect the OEC against heat-induced inactivation. Low-potential cytochrome c that plays a role in the OEC of PSII. The chain is Photosystem II extrinsic protein V from Microcystis aeruginosa.